A 200-amino-acid chain; its full sequence is 3-isopropylmalate dehydratase small subunit (200 aa).

It belongs to the LeuD family. LeuD type 1 subfamily. As to quaternary structure, heterodimer of LeuC and LeuD.

The catalysed reaction is (2R,3S)-3-isopropylmalate = (2S)-2-isopropylmalate. Its pathway is amino-acid biosynthesis; L-leucine biosynthesis; L-leucine from 3-methyl-2-oxobutanoate: step 2/4. Catalyzes the isomerization between 2-isopropylmalate and 3-isopropylmalate, via the formation of 2-isopropylmaleate. The chain is 3-isopropylmalate dehydratase small subunit from Campylobacter jejuni subsp. jejuni serotype O:23/36 (strain 81-176).